Consider the following 194-residue polypeptide: Imidazoleglycerol-phosphate dehydratase (194 aa).

It belongs to the imidazoleglycerol-phosphate dehydratase family.

The protein resides in the cytoplasm. It catalyses the reaction D-erythro-1-(imidazol-4-yl)glycerol 3-phosphate = 3-(imidazol-4-yl)-2-oxopropyl phosphate + H2O. Its pathway is amino-acid biosynthesis; L-histidine biosynthesis; L-histidine from 5-phospho-alpha-D-ribose 1-diphosphate: step 6/9. This is Imidazoleglycerol-phosphate dehydratase from Streptococcus mutans serotype c (strain ATCC 700610 / UA159).